The following is a 449-amino-acid chain: Glucose-6-phosphate isomerase (449 aa).

Glu-291 acts as the Proton donor in catalysis. Active-site residues include His-312 and Lys-426.

The protein belongs to the GPI family.

The protein resides in the cytoplasm. It catalyses the reaction alpha-D-glucose 6-phosphate = beta-D-fructose 6-phosphate. Its pathway is carbohydrate biosynthesis; gluconeogenesis. It functions in the pathway carbohydrate degradation; glycolysis; D-glyceraldehyde 3-phosphate and glycerone phosphate from D-glucose: step 2/4. In terms of biological role, catalyzes the reversible isomerization of glucose-6-phosphate to fructose-6-phosphate. This chain is Glucose-6-phosphate isomerase, found in Streptococcus pyogenes serotype M6 (strain ATCC BAA-946 / MGAS10394).